A 471-amino-acid chain; its full sequence is MPTNIYVTEEELKKQEKIMKEIAEENKGKNLYYHIETYGCQMNVHDSEKLAGMLEKMGYKYTENLEQADVLLFNTCAVREHAEIRVLGRVSQMKELKARNPNLIIGVSGCMMQEKNVVEAIKEKYSYIDIVFGTHNIYKFPQLLWEALNSQDIVIDIIEDTKNVIEELPVKRDSNLKAWVNIIYGCNNFCTYCIVPYTRGREKSRKPEDIIAEVKELAQKGYKEITLLGQNVNSYGKDLDEDITFAKLLYKLNDIEGIERIRFMTSHPKDISDELIYAMRDLDKVCEHLHLPVQAGSNKILKKMNRKYTKEHYLEIIDKVRSNIPDIAITTDIIVGFPGETEEDFLETLDLVERVRFDAAYTFIYSKRAGTVAANMPDQVDDAVKHERLERLIELQNKISLEKSAELRGKIVEVLIEGISKRDSNKLTSRTRTNKVVHFVGDESLIGKLANVKITETKAWTMQGELVEVIR.

Residues 31–149 enclose the MTTase N-terminal domain; sequence LYYHIETYGC…FPQLLWEALN (119 aa). Residues C40, C76, C110, C186, C190, and C193 each contribute to the [4Fe-4S] cluster site. The region spanning 172–402 is the Radical SAM core domain; that stretch reads RDSNLKAWVN…IELQNKISLE (231 aa). The TRAM domain occupies 405 to 468; it reads AELRGKIVEV…AWTMQGELVE (64 aa).

It belongs to the methylthiotransferase family. MiaB subfamily. As to quaternary structure, monomer. It depends on [4Fe-4S] cluster as a cofactor.

It is found in the cytoplasm. The catalysed reaction is N(6)-dimethylallyladenosine(37) in tRNA + (sulfur carrier)-SH + AH2 + 2 S-adenosyl-L-methionine = 2-methylsulfanyl-N(6)-dimethylallyladenosine(37) in tRNA + (sulfur carrier)-H + 5'-deoxyadenosine + L-methionine + A + S-adenosyl-L-homocysteine + 2 H(+). Its function is as follows. Catalyzes the methylthiolation of N6-(dimethylallyl)adenosine (i(6)A), leading to the formation of 2-methylthio-N6-(dimethylallyl)adenosine (ms(2)i(6)A) at position 37 in tRNAs that read codons beginning with uridine. In Thermoanaerobacter sp. (strain X514), this protein is tRNA-2-methylthio-N(6)-dimethylallyladenosine synthase.